The primary structure comprises 228 residues: 2-C-methyl-D-erythritol 4-phosphate cytidylyltransferase (228 aa).

This sequence belongs to the IspD/TarI cytidylyltransferase family. IspD subfamily.

The enzyme catalyses 2-C-methyl-D-erythritol 4-phosphate + CTP + H(+) = 4-CDP-2-C-methyl-D-erythritol + diphosphate. Its pathway is isoprenoid biosynthesis; isopentenyl diphosphate biosynthesis via DXP pathway; isopentenyl diphosphate from 1-deoxy-D-xylulose 5-phosphate: step 2/6. Catalyzes the formation of 4-diphosphocytidyl-2-C-methyl-D-erythritol from CTP and 2-C-methyl-D-erythritol 4-phosphate (MEP). This chain is 2-C-methyl-D-erythritol 4-phosphate cytidylyltransferase, found in Geobacillus kaustophilus (strain HTA426).